A 552-amino-acid polypeptide reads, in one-letter code: MENVKQTIRAPRGTELQTKGWIQEAALRMLMNNLDPEVAEKPEELVVYGGIGRAARNWESYQAIVDSLKTLESDETLLVQSGKPVAIFKSHEDAPRVLLANSNLVPKWANWEHFRELEQKGLMMYGQMTAGSWIYIGTQGILQGTYETFGEAARQHFGGSLKGTLTLTAGLGGMGGAQPLAVTMNGGVVIAIDVDKRSIERRIEKRYCDMYTESLEEALAVATEYKEKKEPISIGLLGNAAEILPELVSRGITPDLVTDQTSAHDPLNGYVPAGYSLEEATKLRAEDPDRYVQLSKESMKKHVEAMLAMQEKGAIAFDYGNNIRQVAFDEGLEHAFDFPGFVPAFIRPLFCEGKGPFRWVALSGDPEDIYKTDEVILREFAHNEHLCNWIRMARQQVEFQGLPSRICWLGYGERAKFGRIINEMVASGELSAPIVIGRDHLDCGSVASPNRETEGMKDGSDAVADWPILNALINSVNGASWVSVHHGGGVGMGYSLHAGMVIVADGTEAAAKRIERVLTSDPGMGVVRHVDAGYDLAVQTAKEKGVNIPMMK.

Residues 49-50 (GG), glutamine 127, 173-175 (GMG), aspartate 193, 239-240 (NA), 260-264 (QTSAH), 270-271 (YV), and tyrosine 319 contribute to the NAD(+) site. Cysteine 407 is an active-site residue. An NAD(+)-binding site is contributed by glycine 489.

Belongs to the urocanase family. Requires NAD(+) as cofactor.

The protein localises to the cytoplasm. The catalysed reaction is 4-imidazolone-5-propanoate = trans-urocanate + H2O. It functions in the pathway amino-acid degradation; L-histidine degradation into L-glutamate; N-formimidoyl-L-glutamate from L-histidine: step 2/3. Catalyzes the conversion of urocanate to 4-imidazolone-5-propionate. The sequence is that of Urocanate hydratase from Bacillus cytotoxicus (strain DSM 22905 / CIP 110041 / 391-98 / NVH 391-98).